Here is a 334-residue protein sequence, read N- to C-terminus: MNLAIVEAPADSTPPPADPLDHLADALFHEMGSPGVYGRTALYEDVVERIAAVISRNREPNTEVMRFPPVMNRAQLERSGYLKSFPNLLGCVCGLHGIESEIDAAISRFDAGGDWTESLSPADLVLSPAACYPLYPIAASRGPVPAAGWSFDVAADCFRREPSRHLDRLQSFRMREFVCIGSADHVSAFRERWIIRAQKIARDLGLTFRIDHANDPFFGRVGQMMAVSQKQLSLKFELLVPLRSEERPTACMSFNYHRDHFGTTWGIVDAAGEPAHTACVAFGMDRLAVAMFHTHGKDVALWPIAVRDLLGLAQTDRGAPSAFEEYRCAKEAGS.

Position 131 (Cys-131) interacts with Zn(2+). ATP is bound by residues Arg-159, Glu-161, and Arg-168–Leu-169. A Zn(2+)-binding site is contributed by Glu-176. Residue Glu-176 coordinates an L-alpha-amino acid. ATP contacts are provided by residues Lys-235 and Ala-250 to Ser-253. Cys-279 serves as a coordination point for Zn(2+). Arg-286 contributes to the ATP binding site.

The protein belongs to the class-II aminoacyl-tRNA synthetase family. Amino acid--[acyl-carrier-protein] ligase subfamily. Homodimer. The cofactor is Zn(2+).

It catalyses the reaction an L-alpha-amino acid + holo-[ACP] + ATP = an L-alpha-aminoacyl-[ACP] + AMP + diphosphate. In terms of biological role, catalyzes the ATP-dependent activation of L-glycine and its transfer to the phosphopantetheine prosthetic group covalently attached to the vicinal carrier protein blr6284 of yet unknown function. May participate in nonribosomal peptide synthesis or related processes. L-alanine is a poor substrate whereas L-serine or D-amino acids are not substrates for ATP-dependent activation. Does not display tRNA aminoacylation activity. This is Amino acid--[acyl-carrier-protein] ligase 2 from Bradyrhizobium diazoefficiens (strain JCM 10833 / BCRC 13528 / IAM 13628 / NBRC 14792 / USDA 110).